A 706-amino-acid chain; its full sequence is Glycine--tRNA ligase beta subunit (706 aa).

The protein belongs to the class-II aminoacyl-tRNA synthetase family. In terms of assembly, tetramer of two alpha and two beta subunits.

It is found in the cytoplasm. The enzyme catalyses tRNA(Gly) + glycine + ATP = glycyl-tRNA(Gly) + AMP + diphosphate. This Hyphomonas neptunium (strain ATCC 15444) protein is Glycine--tRNA ligase beta subunit.